A 3198-amino-acid polypeptide reads, in one-letter code: Helicase domino (3198 aa).

Gly residues predominate over residues 1 to 12 (MNEGNSAGGGHE). 3 disordered regions span residues 1 to 27 (MNEGNSAGGGHEGLSPAPPAVPDRVTP), 93 to 112 (LPQQQQQTAEATAAAAAPAH), and 119 to 148 (SSTIEASVLPPQAKRQRLDDNEDRTSAASI). A compositionally biased stretch (basic and acidic residues) spans 134-143 (QRLDDNEDRT). Residues 187–212 (KKRILQQKLQILRNLKERHLENVSEY) are a coiled coil. Disordered stretches follow at residues 256–350 (TSAA…SATS) and 391–474 (GGTP…TPNS). 2 stretches are compositionally biased toward polar residues: residues 264-281 (QNQKYTTQQTDSVESSLV) and 297-329 (NISNSTVKTNTQSQVPSKIGSFTESTPAATESN). The segment covering 330 to 350 (SSTTVPGTATSGAATSTSATS) has biased composition (low complexity). The span at 391–404 (GGTPLLPCNTSAGS) shows a compositional bias: polar residues. Residues 452–464 (PGTPTSGSLLSPA) are compositionally biased toward low complexity. Residues 507–579 (LPKLQEPSRP…QELQLKRVAS (73 aa)) enclose the HSA domain. The interval 635–848 (NKSVADTPSL…DMEEQDEQED (214 aa)) is disordered. Over residues 638–650 (VADTPSLNSSRLT) the composition is skewed to polar residues. The segment covering 652 to 664 (PKRESDDDFRPES) has biased composition (basic and acidic residues). Phosphoserine is present on residues serine 656, serine 664, and serine 666. The stretch at 666 to 696 (SEDDEETIAKAEEDAADVKEEVTALAKESEM) forms a coiled coil. Basic and acidic residues-rich tracts occupy residues 672–695 (TIAKAEEDAADVKEEVTALAKESE) and 711–721 (ENRDKLMKEEQ). Threonine 729 carries the phosphothreonine modification. Phosphoserine is present on residues serine 733, serine 736, and serine 744. Residues 741-784 (KEASDDDENTISKQEEAEQEIDHKKEIDELEADNDLSVEQLLAK) adopt a coiled-coil conformation. A compositionally biased stretch (basic and acidic residues) spans 753-767 (KQEEAEQEIDHKKEI). Positions 805 to 831 (LDSDDDSTAVDSTEESEDAATEDEEDL) are enriched in acidic residues. Position 838 is a phosphothreonine (threonine 838). One can recognise a Helicase ATP-binding domain in the interval 926 to 1091 (VTMNERKLNG…WSLMHFLMPY (166 aa)). 939–946 (DEMGLGKT) provides a ligand contact to ATP. The segment at 1471–1492 (VQKQSIANGKTEPEEETEAEDP) is disordered. The Helicase C-terminal domain occupies 1662–1812 (TMDRLLRQLK…DMAIEGGNFT (151 aa)). The disordered stretch occupies residues 1828–1856 (EQSEQDESSQEKSENKDRIVATTTLSDTP). A compositionally biased stretch (basic and acidic residues) spans 1836-1846 (SQEKSENKDRI). A coiled-coil region spans residues 1951-1996 (AAWTAEQLRAAEAELEAQKREWEANRLAAMHKEEELLKQETEAEEM). Residues 2061–2100 (KEHKRSRTDAGYDGSRRPNKMRREDNYVPPRSLFDRPTPQ) form a disordered region. Residues 2067–2086 (RTDAGYDGSRRPNKMRREDN) are compositionally biased toward basic and acidic residues. A Myb-like domain is found at 2136-2205 (TEPEAMAEWC…QCRWRYETHI (70 aa)). Positions 2318-2362 (IREKQRGQQMSQPPVGVGVVQQMQQQSQQQQQPAPPPLPQQQQPQ) are disordered. Over residues 2325–2349 (QQMSQPPVGVGVVQQMQQQSQQQQQ) the composition is skewed to low complexity.

Belongs to the SNF2/RAD54 helicase family. SWR1 subfamily. Component of the Tip60 chromatin-remodeling complex which contains Domino, Tip60, Tra1, Brd8, E(Pc), DMAP1, Pontin, Reptin, Ing3, Act87E, BAP55, Mrg15, MrgBP, Gas41 and YL-1. In terms of tissue distribution, isoform B is present at high levels in ovary, in follicle cells, nurse cells and oocyte. Isoform B is also present in germline and somatic stem cells from the germarium. Isoform A is undetectable in adult ovary (at protein level).

It is found in the nucleus. Mediates the ATP-dependent exchange of unmodified histone H2AV for its phosphorylated and acetylated form H2AVK5acS138ph, leading to transcriptional regulation of selected genes by chromatin remodeling. Involved in Notch signaling. Represses E2F target genes. Required for somatic stem cell self-renewal but not for germline stem cell self-renewal. Involved in oogenesis. The protein is Helicase domino (dom) of Drosophila melanogaster (Fruit fly).